The chain runs to 85 residues: MVERNLRKTRTGKVVSDKMDKTIVVAVVDNVKHPLYGKIVKRTYKLKAHDENNECQIGDRVKVMETRPLSKDKRWRLVEIIEKAK.

It belongs to the universal ribosomal protein uS17 family. In terms of assembly, part of the 30S ribosomal subunit.

One of the primary rRNA binding proteins, it binds specifically to the 5'-end of 16S ribosomal RNA. This Lachnoclostridium phytofermentans (strain ATCC 700394 / DSM 18823 / ISDg) (Clostridium phytofermentans) protein is Small ribosomal subunit protein uS17.